Consider the following 61-residue polypeptide: ORF6 protein (61 aa).

The interval 18–24 (IMRTFKV) is important for host Golgi localization.

Belongs to the coronaviruses accessory protein 6 family. As to quaternary structure, interacts (via C-terminus) with host RAE1 in the NUP98-RAE1 complex; this interaction disrupts the host nuclear import. Interacts with host KPNA2; this interaction may inhibit IFN-beta production by blocking IRF3 nuclear translocation.

The protein resides in the host endoplasmic reticulum membrane. It localises to the host Golgi apparatus membrane. In terms of biological role, disrupts bidirectional nucleocytoplasmic transport by interacting with the host RAE1-NUP98 complex. Disrupts cell nuclear import complex formation by tethering karyopherin alpha 2 and karyopherin beta 1 to the membrane. Retention of import factors at the ER/Golgi membrane leads to a loss of transport into the nucleus. Prevents STAT1 nuclear translocation in response to interferon signaling, thus blocking the expression of interferon stimulated genes (ISGs) that display multiple antiviral activities. Suppresses IFN-beta production possibly by blocking IRF3 nuclear translocation. Might induce accumulation of host HNRNPA1. Its function is as follows. May play a role in viral double membrane vesicles networks to enhance viral replication. This Homo sapiens (Human) protein is ORF6 protein.